A 441-amino-acid polypeptide reads, in one-letter code: MDVHFDNWRFLSRPDKVIVHLLLPQTFFESHHIPFDPNLTFWSQTRFHHLDFPPTRYVKIWGKLYFSLPGLPSKACPGIAVSLVINIEENMYNPFDMTVLKILLNENIYYIKFFHMELFFPYIAPNSLQDTSIEEPFKNVDHIDAILNTTSPVTNLYKNPLGVLANLLQSRPQSSPRHHFALEDPGKVRGYEQPSLLQTDKAMPKVSYVKHKWSILNSEPTVTCVKHIFTKKSYFICSYPTMSNSQCTSVLDTISVQELAHVSPTAVLDAEKAFLFKHQHRFVNTLEHVCKSKNYAIEQHVPVLIQKDEETASSIKDHFTETCFVLESTVSEASAWVRATFARYLNKPKAFWIDYIRLWEEGVHTLGKSVPELKEDVCEEKMWHLLSLNKEFIHCIRNQGCTGVLVDSNLNAWLILPGGFVIKGHYNITPEDILFVGARYG.

This sequence belongs to the herpesviridae CVC1 protein family. In terms of assembly, interacts (via C-terminus) with capsid vertex component 2/CVC2.

It localises to the virion. The protein resides in the host nucleus. In terms of biological role, capsid vertex-specific component that plays a role during viral DNA encapsidation, assuring correct genome cleavage and presumably stabilizing capsids that contain full-length viral genomes. The sequence is that of Capsid vertex component 1 from Saimiriine herpesvirus 2 (strain 11) (SaHV-2).